The sequence spans 443 residues: Mitochondrial enolase superfamily member 1 (443 aa).

Substrate is bound by residues 24-26 (GAD) and Y34. The residue at position 148 (S148) is a Phosphoserine. K220 is a substrate binding site. K222 serves as the catalytic Proton donor/acceptor. D250 is a Mg(2+) binding site. Substrate contacts are provided by residues N252, E276, E305, 355–357 (HAG), and E386. The Mg(2+) site is built by E276 and E305. Residue H355 is part of the active site.

This sequence belongs to the mandelate racemase/muconate lactonizing enzyme family. ENOSF1 subfamily. Mg(2+) serves as cofactor. In terms of processing, could be sumoylated.

The protein localises to the mitochondrion. It catalyses the reaction L-fuconate = 2-dehydro-3-deoxy-L-fuconate + H2O. Plays a role in the catabolism of L-fucose, a sugar that is part of the carbohydrates that are attached to cellular glycoproteins. Catalyzes the dehydration of L-fuconate to 2-keto-3-deoxy-L-fuconate by the abstraction of the 2-proton to generate an enediolate intermediate that is stabilized by the magnesium ion. The protein is Mitochondrial enolase superfamily member 1 (ENOSF1) of Homo sapiens (Human).